A 426-amino-acid polypeptide reads, in one-letter code: MFGRNFPFFNSIGGFYPRESLDSKRPSGSGYTSKVRVRDKYHIVGFISSGTYGRVYKAIGKDGRKGEYAIKKFKPDKEGEIIQYTGLSQSAIREMALCSELDHPNVVQLAEIILEDKCIFMVFEYTEHDLLQIIHHHTQPQRHAIPAPMIKSILFQLLNGLLYLHTNWVLHRDLKPANILVTSSGAVRIGDLGLARLFYKPLNSLYSGDKVVVTIWYRAPELLMGSRHYTPAVDLWAVGCIFAELLSLRPIFKGEEAKMDSKKTVPFQRNQMMKIIDIMGLPRKETWPGLVSMPEFSQLQSLAMSRGYINRQCNLEGWYQSCLKNNGYSPGSAAGTPGAEGFDLLSRLLEYDPTKRISAREALEHPYFTTGTPVTANCFAGYEGKYPHRRVTQDDNDIRSGSLPGTKRSGLPDDSLMGRAAKRLKE.

The region spanning 41-368 (YHIVGFISSG…AREALEHPYF (328 aa)) is the Protein kinase domain. Residues 47–55 (ISSGTYGRV) and lysine 71 contribute to the ATP site. Aspartate 173 (proton acceptor) is an active-site residue. The interval 390-426 (RVTQDDNDIRSGSLPGTKRSGLPDDSLMGRAAKRLKE) is disordered.

The protein belongs to the protein kinase superfamily. CMGC Ser/Thr protein kinase family. CDC2/CDKX subfamily. As to quaternary structure, component of the srb8-11 complex, a regulatory module of the Mediator complex. Requires Mg(2+) as cofactor.

It is found in the nucleus. The catalysed reaction is L-seryl-[protein] + ATP = O-phospho-L-seryl-[protein] + ADP + H(+). The enzyme catalyses L-threonyl-[protein] + ATP = O-phospho-L-threonyl-[protein] + ADP + H(+). It carries out the reaction [DNA-directed RNA polymerase] + ATP = phospho-[DNA-directed RNA polymerase] + ADP + H(+). Its function is as follows. Component of the srb8-11 complex. The srb8-11 complex is a regulatory module of the Mediator complex which is itself involved in regulation of basal and activated RNA polymerase II-dependent transcription. The srb8-11 complex may be involved in the transcriptional repression of a subset of genes regulated by Mediator. It may inhibit the association of the Mediator complex with RNA polymerase II to form the holoenzyme complex. The srb8-11 complex phosphorylates the C-terminal domain (CTD) of the largest subunit of RNA polymerase II. The protein is Serine/threonine-protein kinase ssn3 (ssn3) of Aspergillus fumigatus (strain ATCC MYA-4609 / CBS 101355 / FGSC A1100 / Af293) (Neosartorya fumigata).